Consider the following 301-residue polypeptide: Methionyl-tRNA formyltransferase (301 aa).

Residue 109 to 112 coordinates (6S)-5,6,7,8-tetrahydrofolate; it reads SILP.

This sequence belongs to the Fmt family.

It catalyses the reaction L-methionyl-tRNA(fMet) + (6R)-10-formyltetrahydrofolate = N-formyl-L-methionyl-tRNA(fMet) + (6S)-5,6,7,8-tetrahydrofolate + H(+). Functionally, attaches a formyl group to the free amino group of methionyl-tRNA(fMet). The formyl group appears to play a dual role in the initiator identity of N-formylmethionyl-tRNA by promoting its recognition by IF2 and preventing the misappropriation of this tRNA by the elongation apparatus. The sequence is that of Methionyl-tRNA formyltransferase from Campylobacter curvus (strain 525.92).